The sequence spans 288 residues: Small ribosomal subunit biogenesis GTPase RsgA (288 aa).

The 158-residue stretch at 61–218 (TNKLIRPPVS…IVDTPGFSSL (158 aa)) folds into the CP-type G domain. GTP contacts are provided by residues 110 to 113 (NKID) and 161 to 169 (GPSGVGKST). Zn(2+) is bound by residues Cys242, Cys247, His249, and Cys255.

The protein belongs to the TRAFAC class YlqF/YawG GTPase family. RsgA subfamily. Monomer. Associates with 30S ribosomal subunit, binds 16S rRNA. Requires Zn(2+) as cofactor.

It is found in the cytoplasm. In terms of biological role, one of several proteins that assist in the late maturation steps of the functional core of the 30S ribosomal subunit. Helps release RbfA from mature subunits. May play a role in the assembly of ribosomal proteins into the subunit. Circularly permuted GTPase that catalyzes slow GTP hydrolysis, GTPase activity is stimulated by the 30S ribosomal subunit. In Clostridium acetobutylicum (strain ATCC 824 / DSM 792 / JCM 1419 / IAM 19013 / LMG 5710 / NBRC 13948 / NRRL B-527 / VKM B-1787 / 2291 / W), this protein is Small ribosomal subunit biogenesis GTPase RsgA.